A 110-amino-acid polypeptide reads, in one-letter code: MATAEPAPAWWKLTFLRKKKSEPKVLYEIAGDHSSNGGEAPGTTDAATDSQFNARLERIVDKTATKGRHVKVSHSGRFKEKKRIRSTLAENPELFPEAETTANENNKSGK.

Disordered stretches follow at residues 29 to 51 (IAGD…TDSQ) and 65 to 110 (TKGR…KSGK). Positions 65 to 85 (TKGRHVKVSHSGRFKEKKRIR) are enriched in basic residues. Positions 100–110 (TTANENNKSGK) are enriched in polar residues.

It belongs to the PRR15 family.

This is Proline-rich protein 15-like protein A (prr15la) from Danio rerio (Zebrafish).